The primary structure comprises 485 residues: Delta(14)-sterol reductase (485 aa).

5 consecutive transmembrane segments (helical) span residues 18–38 (FFGPPGAFAISFLLPVLVYVF), 77–97 (GLVSWEASAATAGYILLSLIL), 131–151 (LAILAAGTAAQGAEFPVWTFI), 155–175 (FIQILTANTIFSYAVATFVYV), and 319–339 (SLGPVGLAVMLSLIGLGFYIF). NADP(+) contacts are provided by residues K346, R350, L373, W378, and 385–386 (NY). A helical transmembrane segment spans residues 431 to 451 (AKGWGMLITYFYILYFAILLI). Residues D457, 461 to 465 (CHRKY), and Y472 contribute to the NADP(+) site.

This sequence belongs to the ERG4/ERG24 family.

It localises to the membrane. The catalysed reaction is 4,4-dimethyl-5alpha-cholesta-8,24-dien-3beta-ol + NADP(+) = 4,4-dimethyl-5alpha-cholesta-8,14,24-trien-3beta-ol + NADPH + H(+). Its pathway is steroid biosynthesis; zymosterol biosynthesis; zymosterol from lanosterol: step 2/6. Its function is as follows. Reduces the C14=C15 double bond of 4,4-dimethyl-cholesta-8,14,24-trienol to produce 4,4-dimethyl-cholesta-8,24-dienol. The protein is Delta(14)-sterol reductase of Fusarium vanettenii (Neocosmospora pisi).